We begin with the raw amino-acid sequence, 285 residues long: Orotidine 5'-phosphate decarboxylase (285 aa).

Substrate-binding positions include D40, K62–H64, D93–T102, Y235, and R253. The Proton donor role is filled by K95.

It belongs to the OMP decarboxylase family.

It catalyses the reaction orotidine 5'-phosphate + H(+) = UMP + CO2. It functions in the pathway pyrimidine metabolism; UMP biosynthesis via de novo pathway; UMP from orotate: step 2/2. This Paracoccidioides brasiliensis protein is Orotidine 5'-phosphate decarboxylase (URA3).